The following is a 175-amino-acid chain: D-glycero-beta-D-manno-heptose-1,7-bisphosphate 7-phosphatase (175 aa).

Catalysis depends on Asp-7, which acts as the Nucleophile. 2 residues coordinate Mg(2+): Asp-7 and Asp-9. Substrate is bound by residues 7–9 (DRD), 15–19 (DSDAY), and 50–53 (TNQS). The active-site Proton donor is the Asp-9. Cys-89, His-91, Cys-97, and Cys-99 together coordinate Zn(2+). 100–101 (RK) is a binding site for substrate. Position 126 (Asp-126) interacts with Mg(2+).

The protein belongs to the gmhB family. As to quaternary structure, monomer. The cofactor is Mg(2+). Zn(2+) serves as cofactor.

It is found in the cytoplasm. It catalyses the reaction D-glycero-beta-D-manno-heptose 1,7-bisphosphate + H2O = D-glycero-beta-D-manno-heptose 1-phosphate + phosphate. The protein operates within nucleotide-sugar biosynthesis; ADP-L-glycero-beta-D-manno-heptose biosynthesis; ADP-L-glycero-beta-D-manno-heptose from D-glycero-beta-D-manno-heptose 7-phosphate: step 2/4. It participates in bacterial outer membrane biogenesis; LPS core biosynthesis. In terms of biological role, converts the D-glycero-beta-D-manno-heptose 1,7-bisphosphate (beta-HBP) intermediate into D-glycero-beta-D-manno-heptose 1-phosphate by removing the phosphate group at the C-7 position. This is D-glycero-beta-D-manno-heptose-1,7-bisphosphate 7-phosphatase from Pseudomonas putida (strain ATCC 47054 / DSM 6125 / CFBP 8728 / NCIMB 11950 / KT2440).